The chain runs to 1871 residues: Girdin (1871 aa).

The Calponin-homology (CH) domain occupies 12-132; the sequence is QFMTSPLVTW…KLLLLLLGCA (121 aa). Residues 196–425 are a coiled coil; the sequence is HLKRLIDERD…EMAQKQSMDE (230 aa). A phosphoserine mark is found at serine 233, serine 237, and serine 449. Residues 458-1385 adopt a coiled-coil conformation; the sequence is TSSRLLKLEM…KIMDQYKFYD (928 aa). 2 disordered regions span residues 816-842 and 1010-1035; these read ENKS…KRLR and RQDE…RESQ. Phosphoserine is present on serine 1020. Over residues 1026–1035 the composition is skewed to basic and acidic residues; sequence EDNKWERESQ. Serine 1387 carries the post-translational modification Phosphoserine. The tract at residues 1390 to 1408 is phosphoinositide-binding; the sequence is RRRGNWITLKMRKLIKSKK. Residues 1407–1416 show a composition bias toward basic and acidic residues; sequence KKDINRERQK. 2 disordered regions span residues 1407–1459 and 1559–1601; these read KKDI…LGTK and TTSF…SNNN. Serine 1417 carries the post-translational modification Phosphoserine; by PKB/AKT1. Composition is skewed to polar residues over residues 1417–1430, 1445–1459, and 1559–1578; these read SLTL…SSEG, VGSN…LGTK, and TTSF…STGS. A Phosphothreonine modification is found at threonine 1421. The short motif at 1672–1702 is the GBA element; that stretch reads KTGSPGSEVVTLQQFLEESNKLTSVQIKSSS. Position 1673 is a phosphothreonine (threonine 1673). At serine 1675 the chain carries Phosphoserine. Residue serine 1690 is modified to Phosphoserine; by PKC/PRKCQ. Residues 1713–1823 form an SH2-like; required for interaction with growth factor receptors region; it reads SLSVSSDFLG…GTTRRTSIHD (111 aa). The residue at position 1717 (serine 1717) is a Phosphoserine. Residues 1736–1871 are disordered; it reads SGKTPGDFYD…KSRSREQQSS (136 aa). The span at 1743–1763 shows a compositional bias: basic and acidic residues; that stretch reads FYDRRTTKPEFLRPGPRKTED. Phosphotyrosine is present on residues tyrosine 1765 and tyrosine 1799. Polar residues-rich tracts occupy residues 1787-1799 and 1807-1818; these read SSLS…SNPY and SVISTAEGTTRR. Serine 1820 and serine 1837 each carry phosphoserine. Over residues 1820 to 1830 the composition is skewed to basic and acidic residues; that stretch reads SIHDFLTKDSR. Over residues 1838-1851 the composition is skewed to low complexity; the sequence is PPAAADSNTTAASN. A compositionally biased stretch (basic and acidic residues) spans 1854-1871; the sequence is KVQESRNSKSRSREQQSS.

The protein belongs to the CCDC88 family. Homodimer. Interacts (via GBA motif) with guanine nucleotide-binding protein G(i) alpha subunits GNAI1, GNAI2 and GNAI3. Also interacts (via GNA motif) with guanine nucleotide-binding protein G(s) alpha subunit GNAS. Interaction with G(i) alpha subunits occurs before interaction with GNAS and is regulated by phosphorylation; phosphorylation at Ser-1675 enhances binding to G(i) alpha subunits while phosphorylation at Ser-1690 abolishes G(i) alpha subunit binding, promoting binding to GNAS. Interacts (via C-terminal SH2-like region) with growth factor receptors EGFR, INSR and KDR/VEGFR2 (via their autophosphorylated cytoplasmic tails). Forms a complex with EGFR and GNAI3 which leads to enhanced EGFR signaling and triggering of cell migration; ligand stimulation is required for recruitment of GNAI3 to the complex. Interacts (tyrosine-phosphorylated form) with phosphatidylinositol 3-kinase (PI3K) regulatory subunit PIK3R1/p85a (via SH2 domains); the interaction enables recruitment of PIK3R1 to the EGFR receptor, enhancing PI3K activity and cell migration. Interacts with serine/threonine-protein kinase PRKCQ; the interaction leads to phosphorylation of CCDC88A and inhibition of its guanine nucleotide exchange factor activity. Interacts (via C-terminus) with DISC1; the interaction is direct. Interacts with AKT proteins; the interaction is inhibited in the presence of DISC1. Interacts with AKT1/PKB (via C-terminus). The non-phosphorylated form interacts with phosphatidylinositol 4-phosphate [PI(4)P] and weakly with phosphatidylinositol 3-phosphate [PI(3)P]. Interacts with microtubules. Interacts with actin. Phosphorylation is induced by epidermal growth factor (EGF) in a phosphoinositide 3-kinase (PI3K)-dependent manner. Phosphorylation by AKT1/PKB is necessary for delocalization from the cell membrane and for cell migration. Phosphorylated on tyrosine residues which promotes binding to phosphatidylinositol 3-kinase (PI3K) regulatory subunit PIK3R1/p85a and enhances PI3K activity. Tyrosine-phosphorylated by both receptor and non-receptor tyrosine kinases in vitro. Tyrosine phosphorylation is required for AKT1-dependent phosphorylation of Ser-1417. Phosphorylation at Ser-1690 by PRKCQ disrupts interaction with GNAI3 and inhibits guanine nucleotide exchange factor activity. As to expression, expressed ubiquitously.

It localises to the cell membrane. It is found in the cytoplasm. The protein resides in the cytosol. Its subcellular location is the cytoplasmic vesicle. The protein localises to the cell projection. It localises to the lamellipodium. It is found in the cytoskeleton. The protein resides in the cilium basal body. Its subcellular location is the microtubule organizing center. The protein localises to the centrosome. It localises to the centriole. In terms of biological role, bifunctional modulator of guanine nucleotide-binding proteins (G proteins). Acts as a non-receptor guanine nucleotide exchange factor which binds to and activates guanine nucleotide-binding protein G(i) alpha subunits. Also acts as a guanine nucleotide dissociation inhibitor for guanine nucleotide-binding protein G(s) subunit alpha GNAS. Essential for cell migration. Interacts in complex with G(i) alpha subunits with the EGFR receptor, retaining EGFR at the cell membrane following ligand stimulation and promoting EGFR signaling which triggers cell migration. Binding to Gi-alpha subunits displaces the beta and gamma subunits from the heterotrimeric G-protein complex which enhances phosphoinositide 3-kinase (PI3K)-dependent phosphorylation and kinase activity of AKT1/PKB. Phosphorylation of AKT1/PKB induces the phosphorylation of downstream effectors GSK3 and FOXO1/FKHR, and regulates DNA replication and cell proliferation. Binds in its tyrosine-phosphorylated form to the phosphatidylinositol 3-kinase (PI3K) regulatory subunit PIK3R1 which enables recruitment of PIK3R1 to the EGFR receptor, enhancing PI3K activity and cell migration. Plays a role as a key modulator of the AKT-mTOR signaling pathway, controlling the tempo of the process of newborn neuron integration during adult neurogenesis, including correct neuron positioning, dendritic development and synapse formation. Inhibition of G(s) subunit alpha GNAS leads to reduced cellular levels of cAMP and suppression of cell proliferation. Essential for the integrity of the actin cytoskeleton. Required for formation of actin stress fibers and lamellipodia. May be involved in membrane sorting in the early endosome. Plays a role in ciliogenesis and cilium morphology and positioning and this may partly be through regulation of the localization of scaffolding protein CROCC/Rootletin. In Homo sapiens (Human), this protein is Girdin (CCDC88A).